The sequence spans 790 residues: Choline transporter-like 2 (790 aa).

A helical membrane pass occupies residues 47–67 (PCLFLFVTFLCAWGYVAYYAV). Asn-102 and Asn-259 each carry an N-linked (GlcNAc...) asparagine glycan. 3 helical membrane-spanning segments follow: residues 288 to 308 (IITP…FQMI), 319 to 339 (ILVF…MLRW), and 344 to 364 (LVWI…YYSF). Asn-384 carries an N-linked (GlcNAc...) asparagine glycan. The next 2 helical transmembrane spans lie at 400 to 420 (LWIL…VLVL) and 449 to 469 (LVPW…LLFL). A glycan (N-linked (GlcNAc...) asparagine) is linked at Asn-483. The next 4 helical transmembrane spans lie at 545–565 (VIGF…VLAF), 592–612 (VYYH…CKII), 691–711 (VTGF…AAVT), and 728–748 (FVPA…FFSV).

The protein belongs to the CTL (choline transporter-like) family.

It localises to the membrane. In Anopheles gambiae (African malaria mosquito), this protein is Choline transporter-like 2.